We begin with the raw amino-acid sequence, 260 residues long: Type III pantothenate kinase (260 aa).

Residue 6–13 (DAGNTNIV) coordinates ATP. 108 to 111 (GADR) serves as a coordination point for substrate. The active-site Proton acceptor is Asp110. Asp130 contacts K(+). Thr133 provides a ligand contact to ATP. Position 187 (Thr187) interacts with substrate.

It belongs to the type III pantothenate kinase family. Homodimer. Requires NH4(+) as cofactor. K(+) is required as a cofactor.

The protein localises to the cytoplasm. The catalysed reaction is (R)-pantothenate + ATP = (R)-4'-phosphopantothenate + ADP + H(+). It participates in cofactor biosynthesis; coenzyme A biosynthesis; CoA from (R)-pantothenate: step 1/5. Catalyzes the phosphorylation of pantothenate (Pan), the first step in CoA biosynthesis. The polypeptide is Type III pantothenate kinase (Rhizorhabdus wittichii (strain DSM 6014 / CCUG 31198 / JCM 15750 / NBRC 105917 / EY 4224 / RW1) (Sphingomonas wittichii)).